The sequence spans 152 residues: MIEDKKVIVQNKKALFNYFIEEILEAGIVLKGSEVQSLRQGKASIEESHASDNGHEVFLYNCHITEYEKANRFNHSTRRPRKLLLHAKEIKKIIGRIRIKGYTLVALSMYFNKKNKVKVELGIAKGKKLYDKRAAIKEKDWKKDQSRLIRQK.

Belongs to the SmpB family.

The protein localises to the cytoplasm. In terms of biological role, required for rescue of stalled ribosomes mediated by trans-translation. Binds to transfer-messenger RNA (tmRNA), required for stable association of tmRNA with ribosomes. tmRNA and SmpB together mimic tRNA shape, replacing the anticodon stem-loop with SmpB. tmRNA is encoded by the ssrA gene; the 2 termini fold to resemble tRNA(Ala) and it encodes a 'tag peptide', a short internal open reading frame. During trans-translation Ala-aminoacylated tmRNA acts like a tRNA, entering the A-site of stalled ribosomes, displacing the stalled mRNA. The ribosome then switches to translate the ORF on the tmRNA; the nascent peptide is terminated with the 'tag peptide' encoded by the tmRNA and targeted for degradation. The ribosome is freed to recommence translation, which seems to be the essential function of trans-translation. The protein is SsrA-binding protein of Rickettsia prowazekii (strain Madrid E).